The sequence spans 289 residues: ATP synthase gamma chain (289 aa).

This sequence belongs to the ATPase gamma chain family. In terms of assembly, F-type ATPases have 2 components, CF(1) - the catalytic core - and CF(0) - the membrane proton channel. CF(1) has five subunits: alpha(3), beta(3), gamma(1), delta(1), epsilon(1). CF(0) has three main subunits: a, b and c.

The protein resides in the cell membrane. Functionally, produces ATP from ADP in the presence of a proton gradient across the membrane. The gamma chain is believed to be important in regulating ATPase activity and the flow of protons through the CF(0) complex. This is ATP synthase gamma chain from Mycoplasmopsis synoviae (strain 53) (Mycoplasma synoviae).